Here is an 80-residue protein sequence, read N- to C-terminus: Large ribosomal subunit protein bL31B (80 aa).

This sequence belongs to the bacterial ribosomal protein bL31 family. Type B subfamily. Part of the 50S ribosomal subunit.

This is Large ribosomal subunit protein bL31B from Stenotrophomonas maltophilia (strain K279a).